The primary structure comprises 85 residues: Toxin Cll6 (85 aa).

A signal peptide spans 1 to 19; sequence MNSLLMIIGCLVLIGTVWT. In terms of domain architecture, LCN-type CS-alpha/beta spans 20–83; the sequence is KEGYLVNMKT…TWPLPGKSCS (64 aa). 4 cysteine pairs are disulfide-bonded: cysteine 31/cysteine 82, cysteine 35/cysteine 58, cysteine 44/cysteine 63, and cysteine 48/cysteine 65. Serine amide is present on serine 83.

It belongs to the long (4 C-C) scorpion toxin superfamily. Sodium channel inhibitor family. Beta subfamily. As to expression, expressed by the venom gland.

The protein resides in the secreted. Its function is as follows. Beta toxins bind voltage-independently at site-4 of sodium channels (Nav) and shift the voltage of activation toward more negative potentials thereby affecting sodium channel activation and promoting spontaneous and repetitive firing. The chain is Toxin Cll6 from Centruroides limpidus (Mexican scorpion).